We begin with the raw amino-acid sequence, 246 residues long: MKKILAEIAYDGSMYHGFQIQPTKPTIQGEIEKALMKINKKKIKIHSSGRTDKGVHAKRQIITFDININIQLNNLKKALNAILLKPGIKILKLKHVKNSFHPRFNAQKRKYSYCILNSDNYYPWESYQAYYVNKKLNINNLNQMAKILIGNHDFTTFSCIKDKSKSKFRHIHSAKFKKKGKYIIFEIIGSSFLWKMVRSIIGTMLDIEIKNESISTFETILKSKNRNLARTTAPANALFLDKVYYE.

The active-site Nucleophile is Asp52. A substrate-binding site is contributed by Tyr111.

This sequence belongs to the tRNA pseudouridine synthase TruA family. In terms of assembly, homodimer.

It carries out the reaction uridine(38/39/40) in tRNA = pseudouridine(38/39/40) in tRNA. Its function is as follows. Formation of pseudouridine at positions 38, 39 and 40 in the anticodon stem and loop of transfer RNAs. The protein is tRNA pseudouridine synthase A of Borreliella afzelii (strain PKo) (Borrelia afzelii).